The following is a 189-amino-acid chain: Elongation factor P (189 aa).

The residue at position 34 (Lys-34) is an N6-(3,6-diaminohexanoyl)-5-hydroxylysine.

This sequence belongs to the elongation factor P family. In terms of processing, may be beta-lysylated on the epsilon-amino group of Lys-34 by the combined action of EpmA and EpmB, and then hydroxylated on the C5 position of the same residue by EpmC (if this protein is present). Lysylation is critical for the stimulatory effect of EF-P on peptide-bond formation. The lysylation moiety may extend toward the peptidyltransferase center and stabilize the terminal 3-CCA end of the tRNA. Hydroxylation of the C5 position on Lys-34 may allow additional potential stabilizing hydrogen-bond interactions with the P-tRNA.

It is found in the cytoplasm. It participates in protein biosynthesis; polypeptide chain elongation. Involved in peptide bond synthesis. Alleviates ribosome stalling that occurs when 3 or more consecutive Pro residues or the sequence PPG is present in a protein, possibly by augmenting the peptidyl transferase activity of the ribosome. Modification of Lys-34 is required for alleviation. The sequence is that of Elongation factor P from Acinetobacter baumannii (strain AB307-0294).